The following is a 403-amino-acid chain: Metacaspase-1 (403 aa).

Residues 1–95 form a disordered region; that stretch reads MFPGSGHNTY…PSGSQSFGQN (95 aa). Pro residues predominate over residues 13–22; that stretch reads YPPPQGPPPN. 2 stretches are compositionally biased toward low complexity: residues 23–34 and 49–62; these read NNGYNSGPNNSY and QYDQQSQYSQQSQP. Catalysis depends on residues histidine 193 and cysteine 249.

It belongs to the peptidase C14B family.

Functionally, involved in cell death (apoptosis). In Scheffersomyces stipitis (strain ATCC 58785 / CBS 6054 / NBRC 10063 / NRRL Y-11545) (Yeast), this protein is Metacaspase-1 (MCA1).